The primary structure comprises 313 residues: Foldase protein PrsA (313 aa).

Residues 1 to 20 form the signal peptide; it reads MKKKLLAGAITLLSVATLAA. A lipid anchor (N-palmitoyl cysteine) is attached at cysteine 21. Cysteine 21 is lipidated: S-diacylglycerol cysteine. Residues 143 to 241 enclose the PpiC domain; that stretch reads TPDVTAQIIR…SQYYIVKLTK (99 aa).

This sequence belongs to the PrsA family.

The protein resides in the cell membrane. It catalyses the reaction [protein]-peptidylproline (omega=180) = [protein]-peptidylproline (omega=0). Its function is as follows. Plays a major role in protein secretion by helping the post-translocational extracellular folding of several secreted proteins. The chain is Foldase protein PrsA from Streptococcus pneumoniae (strain P1031).